The following is a 464-amino-acid chain: MSTQTKKVTRTIITSSSGGGGGGGGGRASYSSSGRFSGGGGRMRAGGVTSRRSVGSSYSAGGGGRVNAVMAAGVMASVGGPAGALQTLSDARMTRAHEKQELSHLNDRFASYIDKVRYLQERNSKLEAQIKIQESREAPNIKDLYEKELRDLRALVDELSNDKAQLEIERNNWQEQAEDYKMKWQDEAGLRSELEAEIERLKKELDAATMARLDLENKLSTAQEEIDFLKRVHDEEIRQLQDQLNESLTIVEVDSRAASTFAPGPDLTEALREIRTQYEELGRVNREDADVKYKQKFSELAHQRERDNEALMTARTEVTELRRNLNSLVAENEALKSKNHALEGSLAELEARMQLEIEEYQAAIRDLEQELETKTSEMAQQMQAYKMLMDTKMALDMEIAAYRKLLEGEEIRLFGESKEGVQQTSSSSSSSYQYSMKSGSGGGGGGSSSGKQQVTVSVSSGEEK.

A compositionally biased stretch (polar residues) spans 1-14; it reads MSTQTKKVTRTIIT. The interval 1–59 is disordered; it reads MSTQTKKVTRTIITSSSGGGGGGGGGRASYSSSGRFSGGGGRMRAGGVTSRRSVGSSYS. Positions 1 to 101 are head; the sequence is MSTQTKKVTR…RMTRAHEKQE (101 aa). Over residues 17–27 the composition is skewed to gly residues; sequence SGGGGGGGGGR. Residues 45 to 59 are compositionally biased toward low complexity; the sequence is AGGVTSRRSVGSSYS. An IF rod domain is found at 98-413; the sequence is EKQELSHLND…KLLEGEEIRL (316 aa). Residues 102 to 133 are coil 1A; that stretch reads LSHLNDRFASYIDKVRYLQERNSKLEAQIKIQ. The linker 1 stretch occupies residues 134-144; sequence ESREAPNIKDL. Residues 145–237 form a coil 1B region; the sequence is YEKELRDLRA…FLKRVHDEEI (93 aa). Residues 238–264 form a linker 2 region; it reads RQLQDQLNESLTIVEVDSRAASTFAPG. The tract at residues 265-413 is coil 2; that stretch reads PDLTEALREI…KLLEGEEIRL (149 aa). The segment at 414 to 464 is tail; it reads FGESKEGVQQTSSSSSSSYQYSMKSGSGGGGGGSSSGKQQVTVSVSSGEEK. The tract at residues 415–464 is disordered; sequence GESKEGVQQTSSSSSSSYQYSMKSGSGGGGGGSSSGKQQVTVSVSSGEEK. The segment covering 420 to 438 has biased composition (low complexity); the sequence is GVQQTSSSSSSSYQYSMKS. The span at 439 to 448 shows a compositional bias: gly residues; that stretch reads GSGGGGGGSS. Positions 449-464 are enriched in low complexity; the sequence is SGKQQVTVSVSSGEEK.

It belongs to the intermediate filament family. Can form homopolymers.

Its subcellular location is the cytoplasm. This chain is Non-neuronal cytoplasmic intermediate filament protein, found in Branchiostoma lanceolatum (Common lancelet).